A 36-amino-acid chain; its full sequence is Cytochrome b6-f complex subunit 7 (36 aa).

A helical transmembrane segment spans residues I5 to G25.

The protein belongs to the PetM family. In terms of assembly, the 4 large subunits of the cytochrome b6-f complex are cytochrome b6, subunit IV (17 kDa polypeptide, PetD), cytochrome f and the Rieske protein, while the 4 small subunits are PetG, PetL, PetM and PetN. The complex functions as a dimer.

The protein resides in the cell inner membrane. Its function is as follows. Component of the cytochrome b6-f complex, which mediates electron transfer between photosystem II (PSII) and photosystem I (PSI), cyclic electron flow around PSI, and state transitions. The protein is Cytochrome b6-f complex subunit 7 of Gloeobacter violaceus (strain ATCC 29082 / PCC 7421).